We begin with the raw amino-acid sequence, 633 residues long: Probable alkaline/neutral invertase A, chloroplastic (633 aa).

A chloroplast-targeting transit peptide spans 1 to 71 (MNAITFLGNS…TNAVPFCTDR (71 aa)). Ser-623 is modified (phosphoserine).

It belongs to the glycosyl hydrolase 100 family. Expressed in flowers.

It is found in the plastid. Its subcellular location is the chloroplast. The enzyme catalyses Hydrolysis of terminal non-reducing beta-D-fructofuranoside residues in beta-D-fructofuranosides.. Chloroplastic invertase that cleaves sucrose into glucose and fructose and may participate in the carbon flux between the cytosol and plastids in leaves. The polypeptide is Probable alkaline/neutral invertase A, chloroplastic (Arabidopsis thaliana (Mouse-ear cress)).